The primary structure comprises 348 residues: D-erythrose-4-phosphate dehydrogenase (348 aa).

NAD(+)-binding positions include 12-13 (RI) and Arg81. Substrate-binding positions include 154–156 (SCT), Arg200, 213–214 (TK), and Arg236. Cys155 functions as the Nucleophile in the catalytic mechanism. Asn318 provides a ligand contact to NAD(+).

Belongs to the glyceraldehyde-3-phosphate dehydrogenase family. Epd subfamily. In terms of assembly, homotetramer.

It localises to the cytoplasm. The enzyme catalyses D-erythrose 4-phosphate + NAD(+) + H2O = 4-phospho-D-erythronate + NADH + 2 H(+). The protein operates within cofactor biosynthesis; pyridoxine 5'-phosphate biosynthesis; pyridoxine 5'-phosphate from D-erythrose 4-phosphate: step 1/5. Catalyzes the NAD-dependent conversion of D-erythrose 4-phosphate to 4-phosphoerythronate. This is D-erythrose-4-phosphate dehydrogenase from Salmonella schwarzengrund (strain CVM19633).